Consider the following 133-residue polypeptide: MHELSIACEIFEQVMSTAKEHGATEVKHVTLQMGRLSHTNPEQLSFCFNVLADESIAKDADLIVEMIPPSLECECGYKGAVDEKKIRENCEFESELLAYAAVMECPVCGKPAQLTGGRELIIKSIEIETENQD.

His2 contributes to the Ni(2+) binding site. 4 residues coordinate Zn(2+): Cys73, Cys75, Cys105, and Cys108.

The protein belongs to the HypA/HybF family.

Involved in the maturation of [NiFe] hydrogenases. Required for nickel insertion into the metal center of the hydrogenase. The polypeptide is Hydrogenase maturation factor HypA (Methanosarcina barkeri (strain Fusaro / DSM 804)).